The following is a 91-amino-acid chain: Small ribosomal subunit protein bS20 (91 aa).

Residues 1–23 (MANTSSAKKATRKIARRTEVNKA) are disordered.

This sequence belongs to the bacterial ribosomal protein bS20 family.

In terms of biological role, binds directly to 16S ribosomal RNA. The polypeptide is Small ribosomal subunit protein bS20 (Rhizobium rhizogenes (strain K84 / ATCC BAA-868) (Agrobacterium radiobacter)).